Consider the following 207-residue polypeptide: A disintegrin and metalloproteinase with thrombospondin motifs 5 (207 aa).

The region spanning 1–74 (HAAFTVAHEI…GHGNCLLDLP (74 aa)) is the Peptidase M12B domain. Residue histidine 8 coordinates Zn(2+). Residue glutamate 9 is part of the active site. Positions 12 and 18 each coordinate Zn(2+). 5 disulfides stabilise this stretch: cysteine 24–cysteine 53, cysteine 95–cysteine 117, cysteine 106–cysteine 127, cysteine 112–cysteine 146, and cysteine 140–cysteine 151. The Disintegrin domain maps to 83 to 164 (ELPGQTYDAS…TKKKYYSTSS (82 aa)). N-linked (GlcNAc...) asparagine glycosylation occurs at asparagine 96. Residues 165-205 (HGNWGSWGSWGQCSRSCGGGVQFAYRHCNNPAPKNNGRYCT) form the TSP type-1 domain. C-linked (Man) tryptophan glycosylation is found at tryptophan 168 and tryptophan 171. An O-linked (Fuc...) serine glycan is attached at serine 180.

Requires Zn(2+) as cofactor. In terms of processing, the precursor is cleaved by furin and PCSK7 outside of the cell. Glycosylated. Can be O-fucosylated by POFUT2 on a serine or a threonine residue found within the consensus sequence C1-X(2)-(S/T)-C2-G of the TSP type-1 repeat domains where C1 and C2 are the first and second cysteine residue of the repeat, respectively. Fucosylated repeats can then be further glycosylated by the addition of a beta-1,3-glucose residue by the glucosyltransferase, B3GALTL. Fucosylation mediates the efficient secretion of ADAMTS family members. Can also be C-glycosylated with one or two mannose molecules on tryptophan residues within the consensus sequence W-X-X-W of the TPRs, and N-glycosylated. These other glycosylations can also facilitate secretion.

The protein localises to the secreted. The protein resides in the extracellular space. It is found in the extracellular matrix. In terms of biological role, metalloproteinase that plays an important role in connective tissue organization, development, inflammation and cell migration. Extracellular matrix (ECM) degrading enzyme that shows proteolytic activity toward the hyalectan group of chondroitin sulfate proteoglycans (CSPGs) including ACAN, VCAN, BCAN and NCAN. Cleavage within the hyalectans occurs at Glu-Xaa recognition motifs. Plays a role in embryonic development, including limb and cardiac morphogenesis, and skeletal muscle development through its VCAN remodeling properties. Cleaves VCAN in the pericellular matrix surrounding myoblasts, facilitating myoblast contact and fusion which is required for skeletal muscle development and regeneration. Participates in the development of brown adipose tissue and browning of white adipose tissue. Plays an important role for T-lymphocyte migration from draining lymph nodes following viral infection. This chain is A disintegrin and metalloproteinase with thrombospondin motifs 5 (ADAMTS5), found in Bos taurus (Bovine).